The following is a 64-amino-acid chain: Small hydrophobic protein (64 aa).

Residues 1 to 20 lie on the Intravirion side of the membrane; that stretch reads MENTSITIEFSSKFWPYFTL. An interaction with host BCAP31 region spans residues 6–15; sequence ITIEFSSKFW. A helical; Signal-anchor for type II membrane protein transmembrane segment spans residues 21–44; that stretch reads IHMITTIISLLIIISIMIAILNKL. Positions 38 to 43 are interaction with small-molecule inhibitor; that stretch reads IAILNK. The Virion surface segment spans residues 45–64; that stretch reads CEYNVFHNKTFELPRARVNT. Asparagine 52 is a glycosylation site (N-linked (GlcNAc...) asparagine; by host).

This sequence belongs to the orthopneumovirus small hydrophobic protein family. In terms of assembly, homopentamer forming a funnel-like pore. Interacts with glycoprotein G; this interaction occurs on the surface of virion particles and infected cells. Interacts with host BCAP31 (via C-terminus); this interaction is direct. Four species of SH have been detected in infected cell cytoplasm: a 7.5 kDa non-glycosylated form (SH0), a 13-15 kDa form that contains one or two N-linked carbohydrate side chains of the high-mannose type (SHg), a 21-30 kDa polylactosaminoglycan-modified form of the protein (SHp), and the isoform generated by alternative translational initiation. Of these different forms, SH0 is by far the most abundant protein detected during virus infection. In terms of processing, tyrosine phosphorylated.

Its subcellular location is the virion membrane. The protein resides in the host cell membrane. It is found in the host Golgi apparatus membrane. The protein localises to the host endoplasmic reticulum membrane. Its activity is regulated as follows. Channel activity is inhibited by copper. Also inhibited by small-molecule pyronin B. In terms of biological role, viroporin that forms a homopentameric ion channel displaying low ion selectivity. May play a role in virus morphogenesis and pathogenicity at various stages of the viral life cycle. Accumulates at the membrane of the Golgi apparatus in infected cells and may facilitate virus release by modifying the secretory pathway. May enhance host membrane permeability and disrupt cellular ion homeostasis, which can be sensed as damage-associated molecular patterns/danger signals, triggering NLRP3 inflammasome activation and inflammatory immune response. Also inhibits host TNFA-mediated signaling pathway and may delay apoptosis, allowing time for the virus to replicate. This Homo sapiens (Human) protein is Small hydrophobic protein.